The primary structure comprises 379 residues: Structure-specific endonuclease subunit EME2 (379 aa).

The interval 1-55 (MARVGPGRAGVSCQGRGRGRGGSGQRRPPTWEISDSDAEDSAGSEAAARARDPAG) is disordered. The tract at residues 50-266 (ARDPAGERRA…YPLKQYRESQ (217 aa)) is nuclease-like domain; forms the post-nick DNA binding interface and is involved in DNA recognition and bending. Residues 288-379 (GLQAAWRRQI…NPDLLLDLGS (92 aa)) are helix-hairpin-helix (2HhH); forms the pre-nick DNA binding interface and is involved in DNA recognition and bending.

This sequence belongs to the EME1/MMS4 family. In terms of assembly, part of the heterodimeric MUS81-EME2 complex; the complex forms specifically during the DNA replication phase of the cell cycle.

The protein resides in the nucleus. In terms of biological role, non-catalytic subunit of the structure-specific, heterodimeric DNA endonuclease MUS81-EME2 which is involved in the maintenance of genome stability. In the complex, EME2 is required for DNA cleavage, participating in DNA recognition and bending. MUS81-EME2 cleaves 3'-flaps and nicked Holliday junctions, and exhibit limited endonuclease activity with 5' flaps and nicked double-stranded DNAs. MUS81-EME2 which is active during the replication of DNA is more specifically involved in replication fork processing. Replication forks frequently encounter obstacles to their passage, including DNA base lesions, DNA interstrand cross-links, difficult-to-replicate sequences, transcription bubbles, or tightly bound proteins. One mechanism for the restart of a stalled replication fork involves nucleolytic cleavage mediated by the MUS81-EME2 endonuclease. By acting upon the stalled fork, MUS81-EME2 generates a DNA double-strand break (DSB) that can be repaired by homologous recombination, leading to the restoration of an active fork. MUS81-EME2 could also function in telomere maintenance. In Homo sapiens (Human), this protein is Structure-specific endonuclease subunit EME2.